A 71-amino-acid polypeptide reads, in one-letter code: Beta-defensin 25 (71 aa).

The first 22 residues, 1 to 22 (MAKWILLIVALLVLSHVPPGST), serve as a signal peptide directing secretion. Cystine bridges form between cysteine 27–cysteine 54, cysteine 34–cysteine 48, and cysteine 38–cysteine 55.

Belongs to the beta-defensin family.

It localises to the secreted. Functionally, has antibacterial activity. This is Beta-defensin 25 (Defb25) from Mus musculus (Mouse).